The sequence spans 322 residues: Picrinine-N-methytransferase (322 aa).

The interval 103–112 (MLDVGCGLGG) is SAM motif I. The interval 166 to 174 (GTFDLVFTI) is SAM motif II. Positions 193–202 (VAAPGAPVVI) are SAM motif III.

The protein belongs to the class I-like SAM-binding methyltransferase superfamily. gTMT family. In terms of assembly, homodimer. As to expression, accumulates in tissues actively synthesizing monoterpenoid indole alkaloids (MIAs) (at protein level). Mainly expressed in young leaves, but barely in roots and stems.

Its subcellular location is the cytoplasm. The protein resides in the cytosol. The enzyme catalyses picrinine + S-adenosyl-L-methionine = ervincine + S-adenosyl-L-homocysteine + H(+). It functions in the pathway alkaloid biosynthesis; vindoline biosynthesis. In terms of biological role, S-adenosyl-L-methionine-dependent N-methyltransferase involved in the biosynthesis of biologically active monoterpenoid indole alkaloids (MIAs) natural products including vindoline. Catalyzes the conversion of picrinine to N-methylpicrinine (ervincine). Also accepts, with low efficiency, 21-hydroxycyclolochnericine and norajmaline as substrates. The protein is Picrinine-N-methytransferase of Vinca minor (Common periwinkle).